We begin with the raw amino-acid sequence, 511 residues long: Bifunctional purine biosynthesis protein PurH (511 aa).

An MGS-like domain is found at 1 to 146 (MGRLALISVT…KNFAHLTVIS (146 aa)).

Belongs to the PurH family.

The enzyme catalyses (6R)-10-formyltetrahydrofolate + 5-amino-1-(5-phospho-beta-D-ribosyl)imidazole-4-carboxamide = 5-formamido-1-(5-phospho-D-ribosyl)imidazole-4-carboxamide + (6S)-5,6,7,8-tetrahydrofolate. It catalyses the reaction IMP + H2O = 5-formamido-1-(5-phospho-D-ribosyl)imidazole-4-carboxamide. Its pathway is purine metabolism; IMP biosynthesis via de novo pathway; 5-formamido-1-(5-phospho-D-ribosyl)imidazole-4-carboxamide from 5-amino-1-(5-phospho-D-ribosyl)imidazole-4-carboxamide (10-formyl THF route): step 1/1. It functions in the pathway purine metabolism; IMP biosynthesis via de novo pathway; IMP from 5-formamido-1-(5-phospho-D-ribosyl)imidazole-4-carboxamide: step 1/1. The sequence is that of Bifunctional purine biosynthesis protein PurH from Microcystis aeruginosa (strain NIES-843 / IAM M-2473).